The following is a 327-amino-acid chain: Endochitinase CH5B (327 aa).

Positions 1–26 (MKKNRMMIMICSVGVVWMLLVGGSYG) are cleaved as a signal peptide. A Chitin-binding type-1 domain is found at 27–67 (EQCGRQAGGALCPGGNCCSQFGWCGSTTDYCGKDCQSQCGG). Disulfide bonds link C29/C44, C38/C50, C43/C57, C61/C65, C96/C158, C169/C177, and C276/C308. The Proton donor role is filled by E140. The propeptide at 317–327 (SLFLSDLVTSQ) is removed in mature form.

Belongs to the glycosyl hydrolase 19 family. Chitinase class I subfamily.

The protein localises to the vacuole. It catalyses the reaction Random endo-hydrolysis of N-acetyl-beta-D-glucosaminide (1-&gt;4)-beta-linkages in chitin and chitodextrins.. Its function is as follows. Defense against chitin-containing fungal pathogens. The protein is Endochitinase CH5B of Phaseolus vulgaris (Kidney bean).